A 426-amino-acid chain; its full sequence is Serine/threonine-protein kinase SRPK (426 aa).

A compositionally biased stretch (basic and acidic residues) spans 1 to 23; the sequence is MENIFKEKEKGKEKAKEEEKEND. The tract at residues 1–40 is disordered; that stretch reads MENIFKEKEKGKEKAKEEEKENDSGDLFDSEDEGTEDYKK. Over residues 24-35 the composition is skewed to acidic residues; that stretch reads SGDLFDSEDEGT. The region spanning 56-419 is the Protein kinase domain; sequence YRIVKKLGWG…ARDSLEHPYM (364 aa). ATP is bound by residues 62 to 70 and lysine 86; that span reads LGWGHFSTV. Aspartate 188 functions as the Proton acceptor in the catalytic mechanism. Positions 318–328 match the Nuclear localization signal motif; that stretch reads PKKGDKYDKTD.

Belongs to the protein kinase superfamily. CMGC Ser/Thr protein kinase family.

The protein localises to the nucleus. It catalyses the reaction L-seryl-[protein] + ATP = O-phospho-L-seryl-[protein] + ADP + H(+). The enzyme catalyses L-threonyl-[protein] + ATP = O-phospho-L-threonyl-[protein] + ADP + H(+). Phosphorylates serine/arginine-rich protein PSR. In Physarum polycephalum (Slime mold), this protein is Serine/threonine-protein kinase SRPK.